The chain runs to 815 residues: Probable AMP deaminase (815 aa).

Residues 5–27 (YALHLAVATLLGASFAAASAYYM) traverse the membrane as a helical segment. Disordered regions lie at residues 53 to 116 (LLDA…PVPT) and 144 to 173 (LLTN…STNM). Low complexity predominate over residues 105 to 116 (VRPTTPRSPVPT). Residues 159-173 (ASQNGDTKPVPSTNM) are compositionally biased toward polar residues. H367 and H369 together coordinate Zn(2+). Substrate-binding positions include H369 and 438–443 (KFNLKY). Residue H635 coordinates Zn(2+). E638 lines the substrate pocket. H657 (proton acceptor) is an active-site residue. A Zn(2+)-binding site is contributed by D712. 713–716 (DPLQ) contributes to the substrate binding site.

This sequence belongs to the metallo-dependent hydrolases superfamily. Adenosine and AMP deaminases family. Homodimer. It depends on Zn(2+) as a cofactor.

It localises to the membrane. It catalyses the reaction AMP + H2O + H(+) = IMP + NH4(+). Its pathway is purine metabolism; IMP biosynthesis via salvage pathway; IMP from AMP: step 1/1. Its function is as follows. AMP deaminase plays a critical role in energy metabolism. This chain is Probable AMP deaminase (AMPD), found in Oryza sativa subsp. japonica (Rice).